The chain runs to 189 residues: Ribosome maturation factor RimM (189 aa).

One can recognise a PRC barrel domain in the interval 118-189 (SGEYYWDDLI…IILVDWDENF (72 aa)).

This sequence belongs to the RimM family. In terms of assembly, binds ribosomal protein uS19.

It localises to the cytoplasm. An accessory protein needed during the final step in the assembly of 30S ribosomal subunit, possibly for assembly of the head region. Essential for efficient processing of 16S rRNA. May be needed both before and after RbfA during the maturation of 16S rRNA. It has affinity for free ribosomal 30S subunits but not for 70S ribosomes. The protein is Ribosome maturation factor RimM of Ruthia magnifica subsp. Calyptogena magnifica.